The sequence spans 173 residues: Crossover junction endodeoxyribonuclease RuvC (173 aa).

Residues Asp-8, Glu-67, and Asp-139 contribute to the active site. Asp-8, Glu-67, and Asp-139 together coordinate Mg(2+).

It belongs to the RuvC family. Homodimer which binds Holliday junction (HJ) DNA. The HJ becomes 2-fold symmetrical on binding to RuvC with unstacked arms; it has a different conformation from HJ DNA in complex with RuvA. In the full resolvosome a probable DNA-RuvA(4)-RuvB(12)-RuvC(2) complex forms which resolves the HJ. It depends on Mg(2+) as a cofactor.

It is found in the cytoplasm. It carries out the reaction Endonucleolytic cleavage at a junction such as a reciprocal single-stranded crossover between two homologous DNA duplexes (Holliday junction).. Functionally, the RuvA-RuvB-RuvC complex processes Holliday junction (HJ) DNA during genetic recombination and DNA repair. Endonuclease that resolves HJ intermediates. Cleaves cruciform DNA by making single-stranded nicks across the HJ at symmetrical positions within the homologous arms, yielding a 5'-phosphate and a 3'-hydroxyl group; requires a central core of homology in the junction. The consensus cleavage sequence is 5'-(A/T)TT(C/G)-3'. Cleavage occurs on the 3'-side of the TT dinucleotide at the point of strand exchange. HJ branch migration catalyzed by RuvA-RuvB allows RuvC to scan DNA until it finds its consensus sequence, where it cleaves and resolves the cruciform DNA. In Psychromonas ingrahamii (strain DSM 17664 / CCUG 51855 / 37), this protein is Crossover junction endodeoxyribonuclease RuvC.